A 280-amino-acid polypeptide reads, in one-letter code: GTP-binding protein rhoC (280 aa).

The tract at residues 13-59 (TSRRHSLVTPPPSVAPRQNRMRSQSVRVSNGTVSTDNSMSSGRVSEA) is disordered. Residues 33–59 (MRSQSVRVSNGTVSTDNSMSSGRVSEA) are compositionally biased toward polar residues. 76–83 (GDGGCGKT) contributes to the GTP binding site. Positions 98–106 (YVPTVFENY) match the Effector region motif. GTP contacts are provided by residues 125-129 (DTAGQ) and 183-186 (LKSD). The interval 251–275 (WDTRLPSSSGKPGGKPIGGKKIKKR) is disordered. Cysteine methyl ester is present on Cys-277. The S-geranylgeranyl cysteine moiety is linked to residue Cys-277. Residues 278–280 (KIL) constitute a propeptide, removed in mature form.

It belongs to the small GTPase superfamily. Rho family.

It localises to the cell membrane. The sequence is that of GTP-binding protein rhoC (rhoC) from Emericella nidulans (strain FGSC A4 / ATCC 38163 / CBS 112.46 / NRRL 194 / M139) (Aspergillus nidulans).